The sequence spans 282 residues: Pantothenate synthetase (282 aa).

An ATP-binding site is contributed by 30-37 (MGFLHDGH). Catalysis depends on His37, which acts as the Proton donor. Gln60 provides a ligand contact to (R)-pantoate. Gln60 serves as a coordination point for beta-alanine. 146-149 (GQKD) contacts ATP. Gln152 serves as a coordination point for (R)-pantoate. Residues Ile175 and 183–186 (KSSR) contribute to the ATP site.

The protein belongs to the pantothenate synthetase family. In terms of assembly, homodimer.

The protein resides in the cytoplasm. It catalyses the reaction (R)-pantoate + beta-alanine + ATP = (R)-pantothenate + AMP + diphosphate + H(+). It functions in the pathway cofactor biosynthesis; (R)-pantothenate biosynthesis; (R)-pantothenate from (R)-pantoate and beta-alanine: step 1/1. Functionally, catalyzes the condensation of pantoate with beta-alanine in an ATP-dependent reaction via a pantoyl-adenylate intermediate. The chain is Pantothenate synthetase from Campylobacter jejuni subsp. jejuni serotype O:6 (strain 81116 / NCTC 11828).